Here is a 122-residue protein sequence, read N- to C-terminus: NADH-quinone oxidoreductase subunit A (122 aa).

Helical transmembrane passes span 10–30 (LIIF…LTAG), 67–87 (FALL…WAVV), and 91–111 (LGLF…IGLI).

The protein belongs to the complex I subunit 3 family. As to quaternary structure, NDH-1 is composed of 14 different subunits. Subunits NuoA, H, J, K, L, M, N constitute the membrane sector of the complex.

Its subcellular location is the cell membrane. The enzyme catalyses a quinone + NADH + 5 H(+)(in) = a quinol + NAD(+) + 4 H(+)(out). Its function is as follows. NDH-1 shuttles electrons from NADH, via FMN and iron-sulfur (Fe-S) centers, to quinones in the respiratory chain. The immediate electron acceptor for the enzyme in this species is believed to be a menaquinone. Couples the redox reaction to proton translocation (for every two electrons transferred, four hydrogen ions are translocated across the cytoplasmic membrane), and thus conserves the redox energy in a proton gradient. The chain is NADH-quinone oxidoreductase subunit A from Geobacillus kaustophilus (strain HTA426).